Consider the following 191-residue polypeptide: Ion-translocating oxidoreductase complex subunit B (191 aa).

The tract at residues 1–26 (MSSLWIAIAAVSAIALVSGLILGFAA) is hydrophobic. In terms of domain architecture, 4Fe-4S spans 32–90 (EADPIVERIDALLPQSQCGQCGYPGCRPYAEAVANGEKINRCAPGGEAVMRNIAALLAV). Residues Cys49, Cys52, Cys57, Cys73, Cys116, Cys119, Cys122, Cys126, Cys146, Cys149, Cys152, and Cys156 each coordinate [4Fe-4S] cluster. 2 4Fe-4S ferredoxin-type domains span residues 107-136 (QVAL…GATR) and 137-166 (ALHT…LVPV).

Belongs to the 4Fe4S bacterial-type ferredoxin family. RnfB subfamily. The complex is composed of six subunits: RnfA, RnfB, RnfC, RnfD, RnfE and RnfG. It depends on [4Fe-4S] cluster as a cofactor.

Its subcellular location is the cell inner membrane. Functionally, part of a membrane-bound complex that couples electron transfer with translocation of ions across the membrane. The polypeptide is Ion-translocating oxidoreductase complex subunit B (Edwardsiella ictaluri (strain 93-146)).